The following is a 98-amino-acid chain: Co-chaperonin GroES (98 aa).

This sequence belongs to the GroES chaperonin family. As to quaternary structure, heptamer of 7 subunits arranged in a ring. Interacts with the chaperonin GroEL.

The protein resides in the cytoplasm. Functionally, together with the chaperonin GroEL, plays an essential role in assisting protein folding. The GroEL-GroES system forms a nano-cage that allows encapsulation of the non-native substrate proteins and provides a physical environment optimized to promote and accelerate protein folding. GroES binds to the apical surface of the GroEL ring, thereby capping the opening of the GroEL channel. This is Co-chaperonin GroES from Beutenbergia cavernae (strain ATCC BAA-8 / DSM 12333 / CCUG 43141 / JCM 11478 / NBRC 16432 / NCIMB 13614 / HKI 0122).